The sequence spans 429 residues: Adenylosuccinate synthetase (429 aa).

GTP-binding positions include 12-18 (GDEGKGK) and 40-42 (GHT). Asp-13 acts as the Proton acceptor in catalysis. The Mg(2+) site is built by Asp-13 and Gly-40. IMP is bound by residues 13–16 (DEGK), 38–41 (NAGH), Thr-128, Arg-142, Gln-223, Thr-238, and Arg-302. His-41 serves as the catalytic Proton donor. Residue 298–304 (TTTGRPR) participates in substrate binding. GTP contacts are provided by residues Arg-304, 330 to 332 (SID), and 412 to 414 (SVG).

It belongs to the adenylosuccinate synthetase family. As to quaternary structure, homodimer. Mg(2+) serves as cofactor.

It localises to the cytoplasm. The enzyme catalyses IMP + L-aspartate + GTP = N(6)-(1,2-dicarboxyethyl)-AMP + GDP + phosphate + 2 H(+). Its pathway is purine metabolism; AMP biosynthesis via de novo pathway; AMP from IMP: step 1/2. Plays an important role in the de novo pathway of purine nucleotide biosynthesis. Catalyzes the first committed step in the biosynthesis of AMP from IMP. This chain is Adenylosuccinate synthetase, found in Lysinibacillus sphaericus (strain C3-41).